Reading from the N-terminus, the 131-residue chain is UPF0102 protein YraN (131 aa).

This sequence belongs to the UPF0102 family.

This chain is UPF0102 protein YraN, found in Salmonella agona (strain SL483).